The primary structure comprises 172 residues: Translationally-controlled tumor protein (172 aa).

Residues Met-1–Cys-172 form the TCTP domain. Residue Ser-46 is modified to Phosphoserine; by PLK1. At Ser-53 the chain carries Phosphoserine. Ser-64 is subject to Phosphoserine; by PLK1. Positions Val-70–Cys-172 are required for reduction of TSC22D1 protein stability.

The protein belongs to the TCTP family. In terms of assembly, homodimer. Interacts with STEAP3. Interacts with TSC22D1; interaction results in the destabilization of TSC22D1 protein.

The protein localises to the cytoplasm. Involved in calcium binding and microtubule stabilization. Acts as a negative regulator of TSC22D1-mediated apoptosis, via interaction with and destabilization of TSC22D1 protein. This is Translationally-controlled tumor protein (TPT1) from Oryctolagus cuniculus (Rabbit).